Reading from the N-terminus, the 344-residue chain is F-box protein HRT3 (344 aa).

A TPR repeat occupies 14–47 (AIAIWEKGVLKEKDGSMSDAINFYRSALKIHDNV). The F-box domain maps to 98-148 (WILEILPDDILLRIIKKVILMSGESWVNLSMTCSTFSKLCFHDSVPFKTFA).

Interacts with SKP1. Component of the probable SCF(HRT3) complex containing CDC53, SKP1, RBX1 and HRT3.

The protein operates within protein modification; protein ubiquitination. In terms of biological role, substrate recognition component of a SCF (SKP1-CUL1-F-box protein) E3 ubiquitin-protein ligase complex which mediates the ubiquitination and subsequent proteasomal degradation of target proteins. Probably recognizes and binds to phosphorylated target proteins. The chain is F-box protein HRT3 (HRT3) from Saccharomyces cerevisiae (strain ATCC 204508 / S288c) (Baker's yeast).